Reading from the N-terminus, the 375-residue chain is MNVEEIEKYLEENFDKLPEGCKQCVKGGKLVLFITGICNNNCYYCPLSEKRKNKDVIYANERLITTVEEAIEEAKLCSSKGVGITGGNPLLKINRTVKFLKALKKEFDEFHAHLYTTPETVNEENLKLLKEADLDEIRLHPTKIFNEGYDEEYIKFLCNKLNLCNKYIEDVGVEIPAIPNMENEILKLAEAIDGIAKFMNINELEFSEENYHELEKRGFMPKDDVSNAIAGSEETALKVIKEFKGDLFINYCPSVLKDAIQMRNRLINRAKNVAKPYEVITEDGLLLRGIMIFDNEDDLKEMAEILEENEIEFEIIDKNICLNPFILEDIIEEMKRQRFPITFSAYISELYPTADALEVERIPLITKKLKFRRRR.

In terms of domain architecture, Radical SAM core spans 23–246 (QCVKGGKLVL…LKVIKEFKGD (224 aa)). Cysteine 38, cysteine 42, and cysteine 45 together coordinate [4Fe-4S] cluster. S-adenosyl-L-methionine is bound by residues 44 to 46 (YCP) and glycine 87.

Belongs to the organic radical-activating enzymes family. [4Fe-4S] cluster serves as cofactor.

The enzyme catalyses glycyl-[protein] + reduced [flavodoxin] + S-adenosyl-L-methionine = glycin-2-yl radical-[protein] + semiquinone [flavodoxin] + 5'-deoxyadenosine + L-methionine + H(+). The protein is Putative glycyl-radical enzyme activating enzyme MJ0021 of Methanocaldococcus jannaschii (strain ATCC 43067 / DSM 2661 / JAL-1 / JCM 10045 / NBRC 100440) (Methanococcus jannaschii).